The following is a 1419-amino-acid chain: MKDLVNFLKAQSKTAEDFDVIKIGLASPDMIRSWSFGEVKKPETINYRTFKPERDGLFCARIFGPVKDYECLCGKYKRLKHRGVICEKCGVEVTQTKVRRERMGHIELASPVAHIWFLKSLPSRIGLLLDMPLRDIERVLYFESYIVIEPGMTDLEKGQLLTEEQYLDAEERWADEFEAKMGAEAIQSILRDMDLEHECEVLREELQETNSETKRKKITKRLKLLEAFIQSGNKPEWMVMTVLPVLPPDLRPLVPLDGGRFATSDLNDLYRRVINRNNRLKRLLDLVAPDIIVRNEKRMLQESVDALLDNGRRGRAITGSNRRPLKSLADMIKGKQGRFRQNLLGKRVDYSGRSVITVGPYLHLHQCGLPKKMALELFRPFIYAKLESRGYATTIKAAKKMVEREDVIVWDILAEVIREHPILLNRAPTLHRLGIQAFEPILIEGKAIQLHPLVCAAFNADFDGDQMAVHVPLTLEAQLEARALMMSTNNILSPANGDPIIVPSQDVVLGIYYMTRDKVNGKGEGMLLQDPREAEKAYRTGRAELHSRVKIRITEYVKNAEGEFEPQTNLVDTTVGRAILWMIAPKGMPFNLFNQTLGKKAISKLINECYRRLGMKESVMFADQIMYTGFAYAARSGSSVGIDDMVIPEKKYEIIAAAEQEVAEIQEQFQSGLVTVGERYNKVIDIWAAANERVAKVMMENLSTEEVINREGNPEKQSSFNSIFMMADSGARGSAAQIRQLAGMRGLMARPDGSIIETPITANFREGLNVLQYFISTHGARKGLADTALKTANSGYLTRRLVDVAQDLVIVEDDCGTHEGIVMSPLIEGGDEKVPLRELVLGRVAAEDVLKPGTEEVLIPRNTLIDEQWCNIIDENSVDSIKVRSVVTCDTDFGVCAKCYGRDLARGHLINQGEAVGVIAAQSIGEPGTQLTMRTFHIGGAASAAAKESSVQVKNNGTIRLANVKFVTNNEGKLVLTSRNTELTVIDAFGRTKEHYKLPYGTTLNKADGAEVTAGEIVANWDPHTMPVISEVAGFVKFVDIVDGLTVSRQTDELTGLSSILVQDVGERATAGKDLRPAIKLVDAQGNDILIEGTDVAAQYFLPGKAIVTLDDGAEINVGDPLARIPQESVGTKDITGGLPRVADLFEARKPKEPAILAEISGIVSFGKETKGKRRLLITPTDGGETYEEMIPKWRQLNVFEGEMVQRGDLISDGAETPHDILRLRGVHAVTEYIVNEVQEVYRLQGVKINDKHIEVIVRQMLRKAIITNAYDSEFLEGEQVEVARIKIVNRKREAEGKPLVEFERELLGITKASLATESFISAASFQETTRVLTEAAVAGKRDELRGLKENVIVGRLIPAGTGFAYHQNRAKNRHNALAAEQAVKFSAADEAEIDAEFNMIADDPTSSLAEMLNMADEE.

The Zn(2+) site is built by Cys71, Cys73, Cys86, and Cys89. Positions 461, 463, and 465 each coordinate Mg(2+). Residues Cys815, Cys889, Cys896, and Cys899 each contribute to the Zn(2+) site.

Belongs to the RNA polymerase beta' chain family. As to quaternary structure, the RNAP catalytic core consists of 2 alpha, 1 beta, 1 beta' and 1 omega subunit. When a sigma factor is associated with the core the holoenzyme is formed, which can initiate transcription. Mg(2+) serves as cofactor. Requires Zn(2+) as cofactor.

It catalyses the reaction RNA(n) + a ribonucleoside 5'-triphosphate = RNA(n+1) + diphosphate. Its function is as follows. DNA-dependent RNA polymerase catalyzes the transcription of DNA into RNA using the four ribonucleoside triphosphates as substrates. The polypeptide is DNA-directed RNA polymerase subunit beta' (Actinobacillus succinogenes (strain ATCC 55618 / DSM 22257 / CCUG 43843 / 130Z)).